The chain runs to 582 residues: Transcription factor tau subunit sfc6 (582 aa).

Residues 1–97 are disordered; it reads MGPKSKEYEN…SAKKQSSKGL (97 aa). Residues 18–39 show a composition bias toward acidic residues; that stretch reads EDNDDDGDFVLENVMSEEDIEI. The span at 63-87 shows a compositional bias: polar residues; the sequence is QPLTPSSSKGAGNEPKSQNSSTTRG. WD repeat units follow at residues 221 to 262, 268 to 314, and 326 to 369; these read TQFL…NFKS, HDWG…VKFH, and FNDS…ECPL.

In terms of assembly, component of the TFIIIC complex including sfc1, sfc3, sfc4, sfc6 and sfc7. The subunits are organized in two globular domains, tauA and tauB, connected by a proteolysis-sensitive and flexible linker. Interacts with sfc1, sfc3 and sfc4.

It is found in the nucleus. Functionally, TFIIIC mediates tRNA and 5S RNA gene activation by binding to intragenic promoter elements. Upstream of the transcription start site, TFIIIC assembles the initiation complex TFIIIB-TFIIIC-tDNA, which is sufficient for RNA polymerase III recruitment and function. Part of the tauB domain of TFIIIC that binds boxB DNA promoter sites of tRNA and similar genes. Cooperates with sfc3 in DNA binding. Localizes to chromatin insulator sequence without recruiting RNA polymerase III and plays a role in nuclear organization. The sequence is that of Transcription factor tau subunit sfc6 from Schizosaccharomyces pombe (strain 972 / ATCC 24843) (Fission yeast).